The primary structure comprises 320 residues: MEEVPHDCPGADSAQAGRGASCQGCPNQRLCASGAGATPDTAIEEIKEKMKTVKHKILVLSGKGGVGKSTFSAHLAHGLAEDENTQIALLDIDICGPSIPKIMGLEGEQVHQSGSGWSPVYVEDNLGVMSVGFLLSSPDDAVIWRGPKKNGMIKQFLRDVDWGEVDYLIVDTPPGTSDEHLSVVRYLATAHIDGAVIITTPQEVSLQDVRKEINFCRKVKLPIIGVVENMSGFICPKCKKESQIFPPTTGGAELMCQDLEVPLLGRVPLDPLIGKNCDKGQSFFIDAPDSPATLAYRSIIQRIQEFCNLHQSKEENLISS.

Met-1 bears the N-acetylmethionine mark. Residues Cys-8, Cys-22, Cys-25, and Cys-31 each contribute to the [4Fe-4S] cluster site. Position 62–69 (62–69) interacts with ATP; it reads GKGGVGKS. Residues Cys-235 and Cys-238 each coordinate [4Fe-4S] cluster. Ser-319 carries the post-translational modification Phosphoserine.

The protein belongs to the Mrp/NBP35 ATP-binding proteins family. NUBP1/NBP35 subfamily. Heterotetramer of 2 NUBP1 and 2 NUBP2 chains. Interacts with KIFC1. Interacts with NUBP2. Interacts with the BBS/CCT complex subunit CCT1. [4Fe-4S] cluster is required as a cofactor.

The protein resides in the cytoplasm. It localises to the nucleus. It is found in the cell projection. The protein localises to the cytoskeleton. Its subcellular location is the cilium axoneme. The protein resides in the cilium basal body. It localises to the microtubule organizing center. It is found in the centrosome. The protein localises to the centriole. Its function is as follows. Component of the cytosolic iron-sulfur (Fe/S) protein assembly (CIA) machinery. Required for maturation of extramitochondrial Fe-S proteins. The NUBP1-NUBP2 heterotetramer forms a Fe-S scaffold complex, mediating the de novo assembly of an Fe-S cluster and its transfer to target apoproteins. Implicated in the regulation of centrosome duplication. Negatively regulates cilium formation and structure. The polypeptide is Cytosolic Fe-S cluster assembly factor NUBP1 (Homo sapiens (Human)).